Here is a 496-residue protein sequence, read N- to C-terminus: Alanine aminotransferase 1 (496 aa).

Ala2 is subject to N-acetylalanine. Thr22 bears the Phosphothreonine mark. Position 314 is an N6-(pyridoxal phosphate)lysine (Lys314).

It belongs to the class-I pyridoxal-phosphate-dependent aminotransferase family. Alanine aminotransferase subfamily. In terms of assembly, homodimer. Pyridoxal 5'-phosphate serves as cofactor.

Its subcellular location is the cytoplasm. The enzyme catalyses L-alanine + 2-oxoglutarate = pyruvate + L-glutamate. Its pathway is amino-acid degradation; L-alanine degradation via transaminase pathway; pyruvate from L-alanine: step 1/1. Catalyzes the reversible transamination between alanine and 2-oxoglutarate to form pyruvate and glutamate. Participates in cellular nitrogen metabolism and also in liver gluconeogenesis starting with precursors transported from skeletal muscles. This Bos taurus (Bovine) protein is Alanine aminotransferase 1 (GPT).